A 163-amino-acid chain; its full sequence is tRNA-acetylating toxin 2 (163 aa).

Acetyl-CoA is bound by residues L89, V91, H96, G97, Q98, G99, A101, R102, and E132. Residue Y137 is part of the active site. Acetyl-CoA is bound at residue R139.

This sequence belongs to the acetyltransferase family. GNAT subfamily. As to quaternary structure, homodimer (in absence of antitoxin). Forms a complex with cognate antitoxin TacA2. Forms a 4:2 antitoxin:toxin complex with cognate antitoxin TacA2.

The enzyme catalyses glycyl-tRNA(Gly) + acetyl-CoA = N-acetylglycyl-tRNA(Gly) + CoA + H(+). Functionally, toxic component of a type II toxin-antitoxin (TA) system. Acetylates tRNA and inhibits translation. Acetylates exclusively Gly in situ. Overexpression during the lag phase of a tacA2-tacT2 deletion strain leads to very small increase in persister cells in the presence of cefotaxime but no detectable growth phenotype in absence of antibiotics. Compared to a protein with a single amino acid change (TacT2 from S.enterica NCTC 13349, Glu-29 is Lys in NCTC 13349) this protein binds tRNA very poorly and acetylates tRNA very poorly. Persister cell formation is neutralized by cognate antitoxin TacA2. Neutralized only by cognate antitoxin TacA2 (A8), but not by TacA1 or TacA3. Plays a role in persister cell formation. The TacA2-TacT2 complex both represses and derepresses expression of its own operon. In Salmonella typhimurium (strain 14028s / SGSC 2262), this protein is tRNA-acetylating toxin 2.